We begin with the raw amino-acid sequence, 473 residues long: Bifunctional protein HldE (473 aa).

The ribokinase stretch occupies residues 1 to 317; sequence MKLSMPRFDQ…RRAVQREQGS (317 aa). 194–197 is an ATP binding site; it reads NLSE. D263 is a catalytic residue. A cytidylyltransferase region spans residues 343–473; that stretch reads FTNGCFDILH…TAIVEKIRQR (131 aa).

It in the N-terminal section; belongs to the carbohydrate kinase PfkB family. This sequence in the C-terminal section; belongs to the cytidylyltransferase family. Homodimer.

The enzyme catalyses D-glycero-beta-D-manno-heptose 7-phosphate + ATP = D-glycero-beta-D-manno-heptose 1,7-bisphosphate + ADP + H(+). The catalysed reaction is D-glycero-beta-D-manno-heptose 1-phosphate + ATP + H(+) = ADP-D-glycero-beta-D-manno-heptose + diphosphate. Its pathway is nucleotide-sugar biosynthesis; ADP-L-glycero-beta-D-manno-heptose biosynthesis; ADP-L-glycero-beta-D-manno-heptose from D-glycero-beta-D-manno-heptose 7-phosphate: step 1/4. It functions in the pathway nucleotide-sugar biosynthesis; ADP-L-glycero-beta-D-manno-heptose biosynthesis; ADP-L-glycero-beta-D-manno-heptose from D-glycero-beta-D-manno-heptose 7-phosphate: step 3/4. Catalyzes the phosphorylation of D-glycero-D-manno-heptose 7-phosphate at the C-1 position to selectively form D-glycero-beta-D-manno-heptose-1,7-bisphosphate. Functionally, catalyzes the ADP transfer from ATP to D-glycero-beta-D-manno-heptose 1-phosphate, yielding ADP-D-glycero-beta-D-manno-heptose. This Pseudomonas aeruginosa (strain LESB58) protein is Bifunctional protein HldE.